A 257-amino-acid chain; its full sequence is Tryptophan synthase alpha chain (257 aa).

Active-site proton acceptor residues include Glu-47 and Asp-58.

The protein belongs to the TrpA family. As to quaternary structure, tetramer of two alpha and two beta chains.

The catalysed reaction is (1S,2R)-1-C-(indol-3-yl)glycerol 3-phosphate + L-serine = D-glyceraldehyde 3-phosphate + L-tryptophan + H2O. Its pathway is amino-acid biosynthesis; L-tryptophan biosynthesis; L-tryptophan from chorismate: step 5/5. Its function is as follows. The alpha subunit is responsible for the aldol cleavage of indoleglycerol phosphate to indole and glyceraldehyde 3-phosphate. The polypeptide is Tryptophan synthase alpha chain (Listeria monocytogenes serotype 4b (strain F2365)).